The following is a 317-amino-acid chain: Ribosomal RNA small subunit methyltransferase H (317 aa).

Residues 30 to 32 (GGH), D50, Y74, D95, and Q102 each bind S-adenosyl-L-methionine.

Belongs to the methyltransferase superfamily. RsmH family.

It is found in the cytoplasm. It carries out the reaction cytidine(1402) in 16S rRNA + S-adenosyl-L-methionine = N(4)-methylcytidine(1402) in 16S rRNA + S-adenosyl-L-homocysteine + H(+). Its function is as follows. Specifically methylates the N4 position of cytidine in position 1402 (C1402) of 16S rRNA. This chain is Ribosomal RNA small subunit methyltransferase H, found in Nitrosomonas europaea (strain ATCC 19718 / CIP 103999 / KCTC 2705 / NBRC 14298).